The following is a 433-amino-acid chain: tRNA(Ile)-lysidine synthase (433 aa).

27–32 (SGGLDS) contacts ATP.

This sequence belongs to the tRNA(Ile)-lysidine synthase family.

Its subcellular location is the cytoplasm. The enzyme catalyses cytidine(34) in tRNA(Ile2) + L-lysine + ATP = lysidine(34) in tRNA(Ile2) + AMP + diphosphate + H(+). Its function is as follows. Ligates lysine onto the cytidine present at position 34 of the AUA codon-specific tRNA(Ile) that contains the anticodon CAU, in an ATP-dependent manner. Cytidine is converted to lysidine, thus changing the amino acid specificity of the tRNA from methionine to isoleucine. This chain is tRNA(Ile)-lysidine synthase, found in Legionella pneumophila subsp. pneumophila (strain Philadelphia 1 / ATCC 33152 / DSM 7513).